A 482-amino-acid chain; its full sequence is NADH-quinone oxidoreductase subunit N (482 aa).

14 helical membrane passes run 11-31 (AVPE…GVFI), 37-57 (IPYY…WYIF), 77-97 (RFSV…FIYA), 106-126 (IPHT…VALV), 131-151 (LLTV…MVAL), 166-186 (FVIG…IFGA), 208-228 (LILV…LGTA), 255-275 (IAAY…LHVQ), 279-299 (MLIV…IVQS), 304-324 (MLAY…LCGT), 332-352 (MFYT…VVLM), 376-396 (AFMM…VGFI), 404-424 (ALIQ…AIVG), and 462-482 (LAVL…HLAF).

Belongs to the complex I subunit 2 family. In terms of assembly, NDH-1 is composed of 14 different subunits. Subunits NuoA, H, J, K, L, M, N constitute the membrane sector of the complex.

The protein resides in the cell inner membrane. The catalysed reaction is a quinone + NADH + 5 H(+)(in) = a quinol + NAD(+) + 4 H(+)(out). Its function is as follows. NDH-1 shuttles electrons from NADH, via FMN and iron-sulfur (Fe-S) centers, to quinones in the respiratory chain. The immediate electron acceptor for the enzyme in this species is believed to be ubiquinone. Couples the redox reaction to proton translocation (for every two electrons transferred, four hydrogen ions are translocated across the cytoplasmic membrane), and thus conserves the redox energy in a proton gradient. The protein is NADH-quinone oxidoreductase subunit N of Coxiella burnetii (strain RSA 493 / Nine Mile phase I).